Consider the following 698-residue polypeptide: UvrABC system protein B (698 aa).

A Helicase ATP-binding domain is found at 28–414 (RRILAGERDV…SGGEFVEQVI (387 aa)). 41–48 (GATGTGKS) serves as a coordination point for ATP. The Beta-hairpin signature appears at 94–117 (YYDYYQPEAYIAQTDTYIEKDSSI). Positions 432–598 (QIDDLIGEIR…PLRKKIADIL (167 aa)) constitute a Helicase C-terminal domain. The tract at residues 609-629 (DTVQVGGSGRNVSRGRRAQSE) is disordered. In terms of domain architecture, UVR spans 653–688 (ADLIKDLTAQMMAAASDLQFELAARFRDEIADLKKE).

Belongs to the UvrB family. As to quaternary structure, forms a heterotetramer with UvrA during the search for lesions. Interacts with UvrC in an incision complex.

It is found in the cytoplasm. The UvrABC repair system catalyzes the recognition and processing of DNA lesions. A damage recognition complex composed of 2 UvrA and 2 UvrB subunits scans DNA for abnormalities. Upon binding of the UvrA(2)B(2) complex to a putative damaged site, the DNA wraps around one UvrB monomer. DNA wrap is dependent on ATP binding by UvrB and probably causes local melting of the DNA helix, facilitating insertion of UvrB beta-hairpin between the DNA strands. Then UvrB probes one DNA strand for the presence of a lesion. If a lesion is found the UvrA subunits dissociate and the UvrB-DNA preincision complex is formed. This complex is subsequently bound by UvrC and the second UvrB is released. If no lesion is found, the DNA wraps around the other UvrB subunit that will check the other stand for damage. This Mycobacterium leprae (strain TN) protein is UvrABC system protein B.